A 910-amino-acid chain; its full sequence is Protein translocase subunit SecA (910 aa).

ATP is bound by residues Gln-87, 105-109, and Asp-508; that span reads GEGKT. Over residues 558 to 568 the composition is skewed to basic and acidic residues; sequence RHESRRIDNQL. Disordered stretches follow at residues 558–580 and 873–910; these read RHES…DPGS and AAQQ…GQLS. Positions 894, 896, 905, and 906 each coordinate Zn(2+). A compositionally biased stretch (basic residues) spans 900–910; the sequence is KKYKHCHGQLS.

This sequence belongs to the SecA family. As to quaternary structure, monomer and homodimer. Part of the essential Sec protein translocation apparatus which comprises SecA, SecYEG and auxiliary proteins SecDF-YajC and YidC. Zn(2+) is required as a cofactor.

The protein localises to the cell inner membrane. Its subcellular location is the cytoplasm. It catalyses the reaction ATP + H2O + cellular proteinSide 1 = ADP + phosphate + cellular proteinSide 2.. Functionally, part of the Sec protein translocase complex. Interacts with the SecYEG preprotein conducting channel. Has a central role in coupling the hydrolysis of ATP to the transfer of proteins into and across the cell membrane, serving both as a receptor for the preprotein-SecB complex and as an ATP-driven molecular motor driving the stepwise translocation of polypeptide chains across the membrane. This Stenotrophomonas maltophilia (strain R551-3) protein is Protein translocase subunit SecA.